A 183-amino-acid polypeptide reads, in one-letter code: Glutathione-regulated potassium-efflux system ancillary protein KefG (183 aa).

Belongs to the NAD(P)H dehydrogenase (quinone) family. KefG subfamily. In terms of assembly, interacts with KefB.

It localises to the cell inner membrane. It catalyses the reaction a quinone + NADH + H(+) = a quinol + NAD(+). The catalysed reaction is a quinone + NADPH + H(+) = a quinol + NADP(+). In terms of biological role, regulatory subunit of a potassium efflux system that confers protection against electrophiles. Required for full activity of KefB. This chain is Glutathione-regulated potassium-efflux system ancillary protein KefG, found in Salmonella gallinarum (strain 287/91 / NCTC 13346).